The chain runs to 479 residues: Cysteine--tRNA ligase (479 aa).

Cysteine 28 contacts Zn(2+). The short motif at 30–40 (PTVYDHAHLGH) is the 'HIGH' region element. Zn(2+)-binding residues include cysteine 207, histidine 232, and glutamate 236. A 'KMSKS' region motif is present at residues 264–268 (KMSKS). Lysine 267 contacts ATP.

Belongs to the class-I aminoacyl-tRNA synthetase family. The cofactor is Zn(2+).

The protein resides in the cytoplasm. The enzyme catalyses tRNA(Cys) + L-cysteine + ATP = L-cysteinyl-tRNA(Cys) + AMP + diphosphate. This chain is Cysteine--tRNA ligase, found in Methanococcus aeolicus (strain ATCC BAA-1280 / DSM 17508 / OCM 812 / Nankai-3).